A 347-amino-acid chain; its full sequence is NADH-ubiquinone oxidoreductase chain 2 (347 aa).

The next 11 membrane-spanning stretches (helical) occupy residues Met1–Met21, His25–Met45, Tyr59–Thr79, Ile96–Pro116, Cys127–Pro147, Ile149–Gly169, Ile178–Pro198, Met200–Ile220, Ile247–Ile267, Ile276–Leu296, and Leu325–Leu345.

Belongs to the complex I subunit 2 family. Core subunit of respiratory chain NADH dehydrogenase (Complex I) which is composed of 45 different subunits. Interacts with TMEM242.

Its subcellular location is the mitochondrion inner membrane. It catalyses the reaction a ubiquinone + NADH + 5 H(+)(in) = a ubiquinol + NAD(+) + 4 H(+)(out). Its function is as follows. Core subunit of the mitochondrial membrane respiratory chain NADH dehydrogenase (Complex I) which catalyzes electron transfer from NADH through the respiratory chain, using ubiquinone as an electron acceptor. Essential for the catalytic activity and assembly of complex I. The chain is NADH-ubiquinone oxidoreductase chain 2 from Natalus stramineus (Mexican funnel-eared bat).